The sequence spans 631 residues: MTQPQMAPICLVENHNEQLSVNQEAIEILDKISQPVVVVAIVGWSHTGKSYLMNCLAGQNHVSGTLPTSQRFPSGLHRAVSDQGHLDVVHAPPHQARALVLLDTEGLGDVEKGDPKNDLWIFALSVLLSSTFVYNSMNTINHQALEQLHYVTELTELIRAKSSPNPHGIKNSTEFVSFFPDFVWTVRDFMLELKLNGEDITSDEYLENALKLIPGNNPRIQASNSARECIRRFFPNRKCFVFEWPTHDIELIKQLETISEDQLDPTFKESAMAFASYIFTYAKIKTLREGIKVTGNGLGTLVTTYVDAINSGAVPCLDDAVTTLAQRENSVAVQKAASHYSEQMAQRLSLPTDTIQELLDVHAACEKEAMAVFMEHSFKDENQQFLKKLVELLREKNGLFLLKNEEASDKYCQEELDRLSKDLMDNISTFSVPGGHRLYMDMREKIEHDYWQVPRKGVKASEVFQNFLQSQAIIESSILQADTALTAGQKAIAEKHTKKEAAEKEQDLLRQKQKEHQEYMEAQEKRNKENLEQLRRKLEQEREQLIKDHNMMLEKLTKEQKTFREEGYKTQAEELRREIHQLGHNIKEMKQNGDSLVESILRSWFSFISPPSESEKAISSVLSLLRKKDRL.

The GB1/RHD3-type G domain maps to 33-283 (SQPVVVVAIV…FASYIFTYAK (251 aa)). GTP is bound by residues 43-50 (GWSHTGKS) and 103-107 (DTEGL). A coiled-coil region spans residues 492–592 (IAEKHTKKEA…GHNIKEMKQN (101 aa)).

This sequence belongs to the TRAFAC class dynamin-like GTPase superfamily. GB1/RHD3 GTPase family. GB1 subfamily. In terms of assembly, heterodimer with other family members, including GBP1, GBP2 and GBP5. Dimerization regulates subcellular location. Interacts with IRF7; preventing interaction between TRAF6 and IRF7, resulting in impaired TRAF6-mediated IRF7 ubiquitination. In terms of tissue distribution, mainly expressed in organs of the immune system, such as spleen and lymph nodes.

It is found in the golgi apparatus membrane. The protein localises to the cytoplasm. It localises to the nucleus. Its subcellular location is the perinuclear region. It carries out the reaction GTP + H2O = GDP + phosphate + H(+). Functionally, interferon (IFN)-inducible GTPase that plays important roles in innate immunity against a diverse range of bacterial, viral and protozoan pathogens. Negatively regulates the antiviral response by inhibiting activation of IRF7 transcription factor. The chain is Guanylate-binding protein 4 from Mus musculus (Mouse).